A 193-amino-acid chain; its full sequence is Sorting nexin-22 (193 aa).

Residues 1–21 form a disordered region; it reads MLEVHIPSVGPEAEGPRQSPE. The PX domain maps to 1 to 118; that stretch reads MLEVHIPSVG…HFPTDPKASN (118 aa). Residues Arg-43, Ser-45, Lys-66, and Arg-79 each coordinate a 1,2-diacyl-sn-glycero-3-phospho-(1D-myo-inositol-3-phosphate).

Belongs to the sorting nexin family. (Microbial infection) Interacts with P.falciparum (strain 3D7) CK1. In terms of tissue distribution, expressed in erythrocytes (at protein level).

It is found in the cytoplasmic vesicle membrane. Functionally, may be involved in several stages of intracellular trafficking. Interacts with membranes containing phosphatidylinositol 3-phosphate (PtdIns(3P)). This chain is Sorting nexin-22 (SNX22), found in Homo sapiens (Human).